Reading from the N-terminus, the 60-residue chain is Large ribosomal subunit protein bL32 (60 aa).

Residues 1-22 are compositionally biased toward basic residues; the sequence is MAVPKKKTSKSRRDMRRSHHAL. A disordered region spans residues 1–27; that stretch reads MAVPKKKTSKSRRDMRRSHHALKGSAY.

This sequence belongs to the bacterial ribosomal protein bL32 family.

The sequence is that of Large ribosomal subunit protein bL32 from Rhodospirillum centenum (strain ATCC 51521 / SW).